The chain runs to 198 residues: Single-stranded DNA cytosine deaminase (198 aa).

A Bipartite nuclear localization signal motif is present at residues 1-30 (MDSLLMKQKKFLYHFKNVRWAKGRHETYLC). The interaction with SUPT6H stretch occupies residues 2 to 26 (DSLLMKQKKFLYHFKNVRWAKGRHE). Residues 23-129 (GRHETYLCYV…KAEPEGLRRL (107 aa)) enclose the CMP/dCMP-type deaminase domain. A Phosphothreonine; by PKA modification is found at T27. Residue S38 is modified to Phosphoserine; by PKA. Residues 39 to 42 (ATSC) are important for interaction with CTNNBL1. H56 contacts Zn(2+). Catalysis depends on E58, which acts as the Proton donor. C87 and C90 together coordinate Zn(2+). The tract at residues 88 to 116 (YDCARHVAEFLRWNPNLSLRIFTARLYFC) is required for interaction with RNF126. Positions 183–198 (LYEVDDLRDAFRMLGF) match the Nuclear export signal motif.

The protein belongs to the cytidine and deoxycytidylate deaminase family. As to quaternary structure, interacts with CTNNBL1; the interaction is important for the immunoglobulin switch activity of AICDA. Interacts (via its NLS) with KPNA1. Interacts with PKA/PRKACA and PRKAR1A/PKR1. Interacts with SUPT6H, TRIM28 and NCL. Directly interacts with MCM3AP/GANP; this interaction may favor AICDA recruitment to immunoglobulin variable region genes, hence promoting somatic hypermutations. Zn(2+) serves as cofactor. In terms of processing, ser-38 is the major site whereas Thr-27 is the minor site of phosphorylation. Phosphorylation regulates its class-switch recombination activity. Probably monoubiquitinated on several residues by RNF126. As to expression, expressed in germinal center B-cells (at protein level).

It localises to the nucleus. It is found in the cytoplasm. It carries out the reaction a 2'-deoxycytidine in single-stranded DNA + H2O + H(+) = a 2'-deoxyuridine in single-stranded DNA + NH4(+). Its function is as follows. Single-stranded DNA-specific cytidine deaminase. Involved in somatic hypermutation (SHM), gene conversion, and class-switch recombination (CSR) in B-lymphocytes by deaminating C to U during transcription of Ig-variable (V) and Ig-switch (S) region DNA. Required for several crucial steps of B-cell terminal differentiation necessary for efficient antibody responses. May also play a role in the epigenetic regulation of gene expression by participating in DNA demethylation. The sequence is that of Single-stranded DNA cytosine deaminase (Aicda) from Mus musculus (Mouse).